The primary structure comprises 264 residues: 5'-nucleotidase SurE (264 aa).

D10, D11, S43, and N99 together coordinate a divalent metal cation.

Belongs to the SurE nucleotidase family. The cofactor is a divalent metal cation.

The protein resides in the cytoplasm. It carries out the reaction a ribonucleoside 5'-phosphate + H2O = a ribonucleoside + phosphate. Its function is as follows. Nucleotidase that shows phosphatase activity on nucleoside 5'-monophosphates. The sequence is that of 5'-nucleotidase SurE from Methanococcus maripaludis (strain C7 / ATCC BAA-1331).